Consider the following 148-residue polypeptide: Endothelial differentiation-related factor 1 homolog (148 aa).

The interval 1 to 26 (MAESDWDTVTVLRKKGPSAAQAKSKQ) is disordered. In terms of domain architecture, HTH cro/C1-type spans 81–135 (IQQGRQSKGMTQKDLATKINEKPQVIADYESGRAIPNNQVMGKIERAIGLKLRGK). Positions 92–111 (QKDLATKINEKPQVIADYES) form a DNA-binding region, H-T-H motif.

The protein localises to the nucleus. Its function is as follows. Probable transcriptional coactivator. The polypeptide is Endothelial differentiation-related factor 1 homolog (EDF1) (Gallus gallus (Chicken)).